The following is a 425-amino-acid chain: TRAF family member-associated NF-kappa-B activator (425 aa).

N-acetylmethionine is present on M1. The necessary for interaction with ZC3H12A stretch occupies residues 1–31 (MDKNIGEQLNKAYEAFRQACMDRDSAVKELQ). A coiled-coil region spans residues 22–62 (DRDSAVKELQQKTENYEQRIREQQEQLSLQQTIIDKLKSQL). The necessary for interaction with TRAF6 stretch occupies residues 70 to 191 (DNNYGCVPLL…QCTDKTDKQE (122 aa)). Phosphoserine occurs at positions 126 and 129. Residues 133–172 (HERGNIEKTFWDLKEEFHKICMLAKAQKDHLSKLNIPDTA) are interaction with TBK1 and IKBKE. The tract at residues 172–191 (ATETQCSVPIQCTDKTDKQE) is TRAF family member interaction. A phosphoserine mark is found at S178 and S208. T213 is modified (phosphothreonine). S225, S228, S341, S354, and S357 each carry phosphoserine. A UBZ1-type zinc finger spans residues 393 to 420 (PRVCEFCQAVFPPSITSRGDFLRHLNSH). The Zn(2+) site is built by C396, C399, H416, and H420.

Homodimer. Found in a deubiquitination complex with TANK, USP10 and ZC3H12A; this complex inhibits genotoxic stress- or interleukin-1-beta-mediated NF-kappaB activation by promoting IKBKG or TRAF6 deubiquitination. Interacts with IKBKG; this interaction increases in response to DNA damage. Interacts with TRAF6; this interaction increases in response to DNA damage and recruits USP10 to the ubiquitinated TRAF6. Interacts with USP10; this interaction increases in response to DNA damage. Interacts with ZC3H12A; this interaction increases in response to DNA damage. Interacts with TBK1. Interacts with IKBKE. Also interacts with TRAF1, TRAF2, and TRAF3 by binding to their TRAF-C domains; the interaction with TRAF2 is disrupted by the phosphorylation of TANK by IKBKE. Interacts more strongly with TRAF1 and TRAF2 than TRAF3. Interacts with IKBKG; the interaction is enhanced by IKBKE and TBK1. Part of a ternary complex consisting of TANK, IKBKB and IKBKG. In terms of assembly, (Microbial infection) Interacts with vaccinia virus protein C6. As to quaternary structure, (Microbial infection) Interacts with Seneca Valley virus protease 3C; this interaction allows the cleavage of TANK and subsequent suppression of host innate immunity. Phosphorylated by IKBKE. Post-translationally, (Microbial infection) Cleaved by encephalomyocarditis virus (EMCV) protease 3C. This cleavage allows the virus to disrupt the TANK-TBK1-IKKepsilon-IRF3 complex, thereby inhibiting the induction of the IFN-beta signal pathway. In terms of processing, (Microbial infection) Cleaved by Seneca Valley virus protease 3C allowing the virus to suppress interferon type-I through both RIG-I and Toll-like receptor-dependent pathways. Ubiquitous.

The protein localises to the cytoplasm. In terms of biological role, adapter protein involved in I-kappa-B-kinase (IKK) regulation which constitutively binds TBK1 and IKBKE playing a role in antiviral innate immunity. Acts as a regulator of TRAF function by maintaining them in a latent state. Blocks TRAF2 binding to LMP1 and inhibits LMP1-mediated NF-kappa-B activation. Negatively regulates NF-kappaB signaling and cell survival upon DNA damage. Plays a role as an adapter to assemble ZC3H12A, USP10 in a deubiquitination complex which plays a negative feedback response to attenuate NF-kappaB activation through the deubiquitination of IKBKG or TRAF6 in response to interleukin-1-beta (IL1B) stimulation or upon DNA damage. Promotes UBP10-induced deubiquitination of TRAF6 in response to DNA damage. May control negatively TRAF2-mediated NF-kappa-B activation signaled by CD40, TNFR1 and TNFR2. In Homo sapiens (Human), this protein is TRAF family member-associated NF-kappa-B activator (TANK).